The primary structure comprises 860 residues: Beta-glucosidase A (860 aa).

Positions 1–19 (MRFTLIEAVALTAVSLASA) are cleaved as a signal peptide. Residues asparagine 61, asparagine 211, and asparagine 252 are each glycosylated (N-linked (GlcNAc...) asparagine). Aspartate 280 is an active-site residue. N-linked (GlcNAc...) asparagine glycosylation is found at asparagine 315, asparagine 322, asparagine 354, asparagine 387, asparagine 442, asparagine 523, asparagine 542, asparagine 564, asparagine 658, asparagine 690, and asparagine 712. The interval 719–753 (SSGDASYGQDSSDYLPEGATDGSAQPILPAGGGPG) is disordered.

Belongs to the glycosyl hydrolase 3 family.

It localises to the secreted. It carries out the reaction Hydrolysis of terminal, non-reducing beta-D-glucosyl residues with release of beta-D-glucose.. It functions in the pathway glycan metabolism; cellulose degradation. Functionally, beta-glucosidases are one of a number of cellulolytic enzymes involved in the degradation of cellulosic biomass. Catalyzes the last step releasing glucose from the inhibitory cellobiose. The chain is Beta-glucosidase A (bglA) from Aspergillus kawachii (strain NBRC 4308) (White koji mold).